The sequence spans 550 residues: Arginine--tRNA ligase (550 aa).

Residues Ala-130–Gly-140 carry the 'HIGH' region motif.

Belongs to the class-I aminoacyl-tRNA synthetase family. Monomer.

The protein localises to the cytoplasm. The catalysed reaction is tRNA(Arg) + L-arginine + ATP = L-arginyl-tRNA(Arg) + AMP + diphosphate. The chain is Arginine--tRNA ligase from Mycobacterium sp. (strain JLS).